The sequence spans 45 residues: Photosystem II reaction center protein K (45 aa).

Positions 1–8 (MEGILFLA) are excised as a propeptide. Residues 24–44 (APVIPVFFLLLAFVWQAAVGF) form a helical membrane-spanning segment.

Belongs to the PsbK family. As to quaternary structure, PSII is composed of 1 copy each of membrane proteins PsbA, PsbB, PsbC, PsbD, PsbE, PsbF, PsbH, PsbI, PsbJ, PsbK, PsbL, PsbM, PsbT, PsbX, PsbY, PsbZ, Psb30/Ycf12, at least 3 peripheral proteins of the oxygen-evolving complex and a large number of cofactors. It forms dimeric complexes.

It localises to the plastid. It is found in the chloroplast thylakoid membrane. Its function is as follows. One of the components of the core complex of photosystem II (PSII). PSII is a light-driven water:plastoquinone oxidoreductase that uses light energy to abstract electrons from H(2)O, generating O(2) and a proton gradient subsequently used for ATP formation. It consists of a core antenna complex that captures photons, and an electron transfer chain that converts photonic excitation into a charge separation. This Guillardia theta (Cryptophyte) protein is Photosystem II reaction center protein K.